Here is a 515-residue protein sequence, read N- to C-terminus: 2,3-bisphosphoglycerate-independent phosphoglycerate mutase (515 aa).

Mn(2+) is bound by residues Asp14 and Ser64. The active-site Phosphoserine intermediate is the Ser64. Residues His125, 155–156 (RD), Arg187, Arg193, 263–266 (RADR), and Lys337 contribute to the substrate site. Positions 404, 408, 445, 446, and 464 each coordinate Mn(2+).

Belongs to the BPG-independent phosphoglycerate mutase family. In terms of assembly, monomer. It depends on Mn(2+) as a cofactor.

The enzyme catalyses (2R)-2-phosphoglycerate = (2R)-3-phosphoglycerate. The protein operates within carbohydrate degradation; glycolysis; pyruvate from D-glyceraldehyde 3-phosphate: step 3/5. Catalyzes the interconversion of 2-phosphoglycerate and 3-phosphoglycerate. This Yersinia pestis bv. Antiqua (strain Antiqua) protein is 2,3-bisphosphoglycerate-independent phosphoglycerate mutase.